We begin with the raw amino-acid sequence, 159 residues long: Ribosomal RNA large subunit methyltransferase H (159 aa).

Residues glycine 108 and 127–132 each bind S-adenosyl-L-methionine; that span reads FSKMTF.

It belongs to the RNA methyltransferase RlmH family. Homodimer.

Its subcellular location is the cytoplasm. It catalyses the reaction pseudouridine(1915) in 23S rRNA + S-adenosyl-L-methionine = N(3)-methylpseudouridine(1915) in 23S rRNA + S-adenosyl-L-homocysteine + H(+). Its function is as follows. Specifically methylates the pseudouridine at position 1915 (m3Psi1915) in 23S rRNA. The sequence is that of Ribosomal RNA large subunit methyltransferase H from Clostridium acetobutylicum (strain ATCC 824 / DSM 792 / JCM 1419 / IAM 19013 / LMG 5710 / NBRC 13948 / NRRL B-527 / VKM B-1787 / 2291 / W).